The primary structure comprises 405 residues: 3-hydroxy-3-methylglutaryl-coenzyme A reductase (405 aa).

Residues Glu100 and Asp310 each act as charge relay system in the active site. Catalysis depends on His400, which acts as the Proton donor.

This sequence belongs to the HMG-CoA reductase family.

It catalyses the reaction (R)-mevalonate + 2 NADP(+) + CoA = (3S)-3-hydroxy-3-methylglutaryl-CoA + 2 NADPH + 2 H(+). It participates in metabolic intermediate biosynthesis; (R)-mevalonate biosynthesis; (R)-mevalonate from acetyl-CoA: step 3/3. Its function is as follows. Converts HMG-CoA to mevalonate. The polypeptide is 3-hydroxy-3-methylglutaryl-coenzyme A reductase (hmgA) (Methanocaldococcus jannaschii (strain ATCC 43067 / DSM 2661 / JAL-1 / JCM 10045 / NBRC 100440) (Methanococcus jannaschii)).